We begin with the raw amino-acid sequence, 563 residues long: Mitochondrial distribution and morphology protein 34 (563 aa).

The 195-residue stretch at 1–195 (MAFNFNWSPL…LPAIIHRLSL (195 aa)) folds into the SMP-LTD domain. Disordered regions lie at residues 298–499 (ERGD…PHTP) and 531–563 (ARRQ…PKAL). 2 stretches are compositionally biased toward polar residues: residues 303–332 (AGTT…FSNR) and 346–357 (SLVNMNSATTGL). Residues 365–383 (SRSHPTRKKKNRVVNLRKP) show a composition bias toward basic residues. The segment covering 386–407 (TESSESGESETASTTAVSEPTV) has biased composition (low complexity). 2 stretches are compositionally biased toward polar residues: residues 458-471 (PSLT…INTQ) and 478-488 (YNQSASTSYTP). Residues 531–540 (ARRQHDDKTA) are compositionally biased toward basic and acidic residues.

Belongs to the MDM34 family. In terms of assembly, component of the ER-mitochondria encounter structure (ERMES) or MDM complex, composed of MMM1, MDM10, MDM12 and MDM34.

The protein localises to the mitochondrion outer membrane. Its function is as follows. Component of the ERMES/MDM complex, which serves as a molecular tether to connect the endoplasmic reticulum (ER) and mitochondria. Components of this complex are involved in the control of mitochondrial shape and protein biogenesis, and function in nonvesicular lipid trafficking between the ER and mitochondria. MDM34 is required for the interaction of the ER-resident membrane protein MMM1 and the outer mitochondrial membrane-resident beta-barrel protein MDM10. In Botryotinia fuckeliana (strain B05.10) (Noble rot fungus), this protein is Mitochondrial distribution and morphology protein 34.